Reading from the N-terminus, the 219-residue chain is GTP-binding protein Rab-3D (219 aa).

Ala2 bears the N-acetylalanine mark. Residue 29-37 coordinates GDP; sequence GNSSVGKTS. 9 residues coordinate GTP: Ser31, Ser32, Val33, Gly34, Lys35, Thr36, Ser37, Pro49, and Ser53. Residue Thr36 coordinates Mg(2+). The short motif at 49–58 is the Switch 1 element; the sequence is PAFVSTVGID. Mg(2+)-binding residues include Thr54 and Asp77. Residue Gly80 participates in GTP binding. The Switch 2 signature appears at 80–96; it reads GQERYRTITTAYYRGAM. Thr86 bears the Phosphothreonine mark. Residues Asn135, Lys136, Asp138, Ala166, and Lys167 each coordinate GTP. Residues 135-138 and 165-167 contribute to the GDP site; these read NKCD and SAK. Ser190 bears the Phosphoserine mark. The disordered stretch occupies residues 190–219; that stretch reads SLEPSSSPGSNGKGPALGDTPPPQPSSCGC. The span at 193–203 shows a compositional bias: low complexity; sequence PSSSPGSNGKG. Positions 209-219 are enriched in pro residues; the sequence is TPPPQPSSCGC. S-geranylgeranyl cysteine attachment occurs at residues Cys217 and Cys219. A Cysteine methyl ester; partial modification is found at Cys219.

The protein belongs to the small GTPase superfamily. Rab family. Interacts with RIMS1, RIMS2, RPH3A and RPH3AL. Interacts with RAB3IP. The GTP-bound form interacts with REP15. Interacts with CHM; phosphorylation at Thr-86 disrupts this interaction. Interacts with MADD (via uDENN domain); the GTP-bound form is preferred for interaction. Mg(2+) is required as a cofactor. In fetal glands the majority of the proteins are methylated, whereas in neonatal and adult glands, only 50% are methylated. In terms of processing, phosphorylation of Thr-86 in the switch II region by LRRK2 prevents the association of RAB regulatory proteins, including CHM. As to expression, highest levels found in lung.

It localises to the cell membrane. It catalyses the reaction GTP + H2O = GDP + phosphate + H(+). Regulated by guanine nucleotide exchange factors (GEFs) which promote the exchange of bound GDP for free GTP. Regulated by GTPase activating proteins (GAPs) which increase the GTP hydrolysis activity. Inhibited by GDP dissociation inhibitors (GDIs) which prevent Rab-GDP dissociation. In terms of biological role, the small GTPases Rab are key regulators of intracellular membrane trafficking, from the formation of transport vesicles to their fusion with membranes. Rabs cycle between an inactive GDP-bound form and an active GTP-bound form that is able to recruit to membranes different sets of downstream effectors directly responsible for vesicle formation, movement, tethering and fusion. RAB3D may be involved in the insulin-induced exocytosis of GLUT4-containing vesicles in adipocytes. The chain is GTP-binding protein Rab-3D from Rattus norvegicus (Rat).